The chain runs to 360 residues: Spermidine/putrescine-binding periplasmic protein 1 (360 aa).

A signal peptide spans 1–16; the sequence is MKKFAGLITASFVAAT.

Belongs to the bacterial solute-binding protein PotD/PotF family.

Its subcellular location is the periplasm. In terms of biological role, required for the activity of the bacterial periplasmic transport system of putrescine and spermidine. Polyamine binding protein. The sequence is that of Spermidine/putrescine-binding periplasmic protein 1 (potD-B) from Haemophilus influenzae (strain ATCC 51907 / DSM 11121 / KW20 / Rd).